The primary structure comprises 396 residues: Probable arginine kinase F46H5.3 (396 aa).

The 83-residue stretch at 47–129 (KIEEGYAKLQ…FDPLIQDYHN (83 aa)) folds into the Phosphagen kinase N-terminal domain. 102–106 (GVGVY) is a substrate binding site. Positions 159–396 (FINSTRIRCG…AHLIALEKAA (238 aa)) constitute a Phosphagen kinase C-terminal domain. ATP is bound by residues 162–166 (STRIR) and His-226. Glu-266 contacts substrate. Residue Arg-270 participates in ATP binding. Cys-312 lines the substrate pocket. Residues 321–325 (RASVH), 349–354 (RGIHGE), and Asp-364 each bind ATP. Glu-354 lines the substrate pocket.

The protein belongs to the ATP:guanido phosphotransferase family.

It catalyses the reaction L-arginine + ATP = N(omega)-phospho-L-arginine + ADP + H(+). The protein is Probable arginine kinase F46H5.3 of Caenorhabditis elegans.